Reading from the N-terminus, the 286-residue chain is Cytotoxin (286 aa).

A propeptide spanning residues 267–286 is cleaved from the precursor; that stretch reads TFYNYASLVPDLETRVRSAE.

This sequence belongs to the aerolysin family.

Its subcellular location is the secreted. In terms of biological role, cytotoxin is thought to form hydrophilic pores in cell membranes. The sequence is that of Cytotoxin (ctx) from Pseudomonas aeruginosa.